A 523-amino-acid polypeptide reads, in one-letter code: Effector protein hopAB1 (523 aa).

3 disordered regions span residues 1–94 (MPGI…EAQQ), 165–223 (VRQQ…QGLD), and 299–320 (RQTTTNSPELPPLASSAESGRR). The span at 18 to 31 (TDGEPVTEREHDSS) shows a compositional bias: basic and acidic residues. Residues 181–194 (SSSGSSQRSLIGRS) are compositionally biased toward low complexity.

The protein belongs to the HopAB family.

Its subcellular location is the secreted. Functionally, effector protein that plays different roles depending on the species and plant cultivars that interact with the pathogen. Acts as a virulence determinant by enhancing the development of disease symptoms and bacterial growth. Acts as an avirulence factor by eliciting hypersensitive response (HR) and plant resistance. This is Effector protein hopAB1 (hopAB1) from Pseudomonas savastanoi pv. glycinea (Pseudomonas syringae pv. glycinea).